The sequence spans 405 residues: Arginine biosynthesis bifunctional protein ArgJ, mitochondrial (405 aa).

Substrate contacts are provided by Thr174, Lys200, Thr211, and Glu300. Thr211 (nucleophile) is an active-site residue.

This sequence belongs to the ArgJ family. As to quaternary structure, heterodimer of an alpha and a beta chain. In terms of processing, the alpha and beta chains are autoproteolytically processed from a single precursor protein within the mitochondrion.

The protein localises to the mitochondrion matrix. The enzyme catalyses N(2)-acetyl-L-ornithine + L-glutamate = N-acetyl-L-glutamate + L-ornithine. It carries out the reaction L-glutamate + acetyl-CoA = N-acetyl-L-glutamate + CoA + H(+). Its pathway is amino-acid biosynthesis; L-arginine biosynthesis; L-ornithine and N-acetyl-L-glutamate from L-glutamate and N(2)-acetyl-L-ornithine (cyclic): step 1/1. It functions in the pathway amino-acid biosynthesis; L-arginine biosynthesis; N(2)-acetyl-L-ornithine from L-glutamate: step 1/4. Functionally, catalyzes two activities which are involved in the cyclic version of arginine biosynthesis: the synthesis of acetylglutamate from glutamate and acetyl-CoA, and of ornithine by transacetylation between acetylornithine and glutamate. The chain is Arginine biosynthesis bifunctional protein ArgJ, mitochondrial from Candida tropicalis (strain ATCC MYA-3404 / T1) (Yeast).